The chain runs to 475 residues: Citrate synthase, mitochondrial (475 aa).

Catalysis depends on residues histidine 310, histidine 356, and aspartate 411.

This sequence belongs to the citrate synthase family.

Its subcellular location is the mitochondrion matrix. The catalysed reaction is oxaloacetate + acetyl-CoA + H2O = citrate + CoA + H(+). The protein operates within carbohydrate metabolism; tricarboxylic acid cycle; isocitrate from oxaloacetate: step 1/2. In Aspergillus niger, this protein is Citrate synthase, mitochondrial (cit-1).